The following is a 971-amino-acid chain: Piwi-like protein 2 (971 aa).

R45 is subject to Symmetric dimethylarginine. Residue R74 is modified to Omega-N-methylarginine; by PRMT5; alternate. The residue at position 74 (R74) is a Symmetric dimethylarginine; by PRMT5; alternate. At R83 the chain carries Omega-N-methylarginine; alternate. A symmetric dimethylarginine; alternate mark is found at R83 and R95. Position 95 is an omega-N-methylarginine; by PRMT5; alternate (R95). At R100 the chain carries Symmetric dimethylarginine; by PRMT5; alternate. R100 is subject to Omega-N-methylarginine; alternate. Residues 102 to 124 form a disordered region; sequence LSANMVRKDREEPRSSLPDPSVL. Symmetric dimethylarginine is present on residues R144 and R156. The disordered stretch occupies residues 159-200; the sequence is SSIGRGMDKPPSAFGLTARDPPRLPQPPALSPTSLHSADPPP. R163 carries the post-translational modification Symmetric dimethylarginine; by PRMT5. Residues 387 to 500 enclose the PAZ domain; the sequence is SVLDVMHAIY…LLPELSFMTG (114 aa). At R549 the chain carries Symmetric dimethylarginine; by PRMT5. The 292-residue stretch at 666 to 957 folds into the Piwi domain; the sequence is MVVCIIMGTR…LAFLSGQILH (292 aa). Active-site residues include D743, E781, D813, and H946.

This sequence belongs to the argonaute family. Piwi subfamily. Interacts with DDX4, MAEL, EIF3A, EIF4E, EIF4G, PRMT5 and WDR77. Associates with EIF4E- and EIF4G-containing m7G cap-binding complexes. Interacts (when methylated on arginine residues) with TDRD1 and TDRKH/TDRD2. Interacts with TDRD12. Component of the PET complex, at least composed of EXD1, PIWIL2, TDRD12 and piRNAs. Interacts with MOV10L1. Interacts with GPAT2. Interacts with Tex19.1 and, probably, Tex19.2. Interacts (via PIWI domain) with BMAL1 and CLOCK. Interacts with GSK3B. Interacts with TEX15. Mg(2+) is required as a cofactor. Arginine methylation by PRMT5 is required for the interaction with Tudor domain-containing protein TDRD1 and subsequent localization to the meiotic nuage, also named P granule. As to expression, expressed in adult testis, specifically in spermatocytes and in spermatogonia. Only detected in primordial germ cells of both sexes. Widely expressed in tumors. Also present at early stages of oocyte growth. Present in the mitotic spermatogonia. Not detected in the first stages of meiosis (preleptotene and leptotene). Detected at the late zygotene stage and increases throughout pachytene, declining from this stage onward until expression stops at the early round spermatid stage (at protein level).

Its subcellular location is the cytoplasm. In terms of biological role, endoribonuclease that plays a central role during spermatogenesis by repressing transposable elements and preventing their mobilization, which is essential for the germline integrity. Plays an essential role in meiotic differentiation of spermatocytes, germ cell differentiation and in self-renewal of spermatogonial stem cells. Its presence in oocytes suggests that it may participate in similar functions during oogenesis in females. Acts via the piRNA metabolic process, which mediates the repression of transposable elements during meiosis by forming complexes composed of piRNAs and Piwi proteins and govern the methylation and subsequent repression of transposons. During piRNA biosynthesis, plays a key role in the piRNA amplification loop, also named ping-pong amplification cycle, by acting as a 'slicer-competent' piRNA endoribonuclease that cleaves primary piRNAs, which are then loaded onto 'slicer-incompetent' PIWIL4. PIWIL2 slicing produces a pre-miRNA intermediate, which is then processed in mature piRNAs, and as well as a 16 nucleotide by-product that is degraded. Required for PIWIL4/MIWI2 nuclear localization and association with secondary piRNAs antisense. Besides their function in transposable elements repression, piRNAs are probably involved in other processes during meiosis such as translation regulation. Indirectly modulates expression of genes such as PDGFRB, SLC2A1, ITGA6, GJA7, THY1, CD9 and STRA8. Represses circadian rhythms by promoting the stability and activity of core clock components BMAL1 and CLOCK by inhibiting GSK3B-mediated phosphorylation and ubiquitination-dependent degradation of these proteins. This chain is Piwi-like protein 2, found in Mus musculus (Mouse).